A 399-amino-acid polypeptide reads, in one-letter code: Bombesin receptor subtype-3 (399 aa).

Polar residues predominate over residues Met1 to Ser31. The interval Met1–Gly38 is disordered. Over Met1–Ser41 the chain is Extracellular. 3 N-linked (GlcNAc...) asparagine glycosylation sites follow: Asn10, Asn18, and Asn29. Residues Pro42 to Leu63 form a helical membrane-spanning segment. Over Gly64–Pro82 the chain is Cytoplasmic. The chain crosses the membrane as a helical span at residues Asn83 to Val103. At Asp104–Lys121 the chain is on the extracellular side. A disulfide bridge links Cys120 with Cys203. The chain crosses the membrane as a helical span at residues Val122–Ala143. Residues Asp144–Lys163 are Cytoplasmic-facing. A helical membrane pass occupies residues Thr164 to Ile184. The Extracellular segment spans residues Phe185–Leu220. A helical transmembrane segment spans residues Cys221–Ala241. Over Arg242–Thr272 the chain is Cytoplasmic. A helical transmembrane segment spans residues Val273–Tyr293. The Extracellular portion of the chain corresponds to Arg294–Ile313. A helical transmembrane segment spans residues Ile314–Leu333. The Cytoplasmic segment spans residues Ser334–Val399.

This sequence belongs to the G-protein coupled receptor 1 family. In terms of assembly, interacts with C6orf89.

It is found in the cell membrane. In terms of biological role, role in sperm cell division, maturation, or function. This receptor mediates its action by association with G proteins that activate a phosphatidylinositol-calcium second messenger system. The polypeptide is Bombesin receptor subtype-3 (BRS3) (Ovis aries (Sheep)).